The following is a 399-amino-acid chain: Fructose-1,6-bisphosphate aldolase/phosphatase (399 aa).

The active-site Proton acceptor; for FBP phosphatase activity is D11. Residues D11, H18, D52, and D53 each coordinate Mg(2+). H18 is a binding site for beta-D-fructose 1,6-bisphosphate. H18 is a binding site for dihydroxyacetone phosphate. Residue Y91 participates in beta-D-fructose 1,6-bisphosphate binding. Residue Q95 coordinates Mg(2+). 104 to 105 (GN) is a beta-D-fructose 1,6-bisphosphate binding site. D132 lines the Mg(2+) pocket. K133 serves as a coordination point for beta-D-fructose 1,6-bisphosphate. K133 provides a ligand contact to dihydroxyacetone phosphate. Residue Y229 is the Proton donor/acceptor; for FBP aldolase activity of the active site. 3 residues coordinate Mg(2+): K232, D233, and D234. The active-site Schiff-base intermediate with DHAP; for FBP aldolase activity is K232. Beta-D-fructose 1,6-bisphosphate contacts are provided by residues 242–243 (QS), R266, D297, and Y358. Residues R266 and D297 each coordinate dihydroxyacetone phosphate.

The protein belongs to the FBP aldolase/phosphatase family. As to quaternary structure, homooctamer; dimer of tetramers. It depends on Mg(2+) as a cofactor.

The catalysed reaction is beta-D-fructose 1,6-bisphosphate + H2O = beta-D-fructose 6-phosphate + phosphate. The enzyme catalyses beta-D-fructose 1,6-bisphosphate = D-glyceraldehyde 3-phosphate + dihydroxyacetone phosphate. The protein operates within carbohydrate biosynthesis; gluconeogenesis. Its function is as follows. Catalyzes two subsequent steps in gluconeogenesis: the aldol condensation of dihydroxyacetone phosphate (DHAP) and glyceraldehyde-3-phosphate (GA3P) to fructose-1,6-bisphosphate (FBP), and the dephosphorylation of FBP to fructose-6-phosphate (F6P). The polypeptide is Fructose-1,6-bisphosphate aldolase/phosphatase (Pyrobaculum neutrophilum (strain DSM 2338 / JCM 9278 / NBRC 100436 / V24Sta) (Thermoproteus neutrophilus)).